Here is an 802-residue protein sequence, read N- to C-terminus: Copper-exporting P-type ATPase (802 aa).

2 consecutive HMA domains span residues 5 to 70 and 72 to 138; these read KKTT…YGVA and ETVE…YDAS. 4 residues coordinate Cu(+): cysteine 16, cysteine 19, cysteine 83, and cysteine 86. The next 6 membrane-spanning stretches (helical) occupy residues 161–181, 192–212, 224–244, 256–276, 411–431, and 438–458; these read LIISAVLSLPLLMLMFVHLFN, WFQFILATPVQFIIGWQFYVG, MDVLVAVGTSAAYFYSIYEMV, LYFETSAVLITLILFGKYLEA, YFVPIVVGIALLTFIVWITLV, and PALVASISVLVIACPCALGLA. Aspartate 495 acts as the 4-aspartylphosphate intermediate in catalysis. Mg(2+) is bound by residues aspartate 690 and aspartate 694. 2 helical membrane-spanning segments follow: residues 748–767 and 771–790; these read LFWAFGYNIAGIPIAALGLL and VAGAAMALSSVSVVTNALRL.

It belongs to the cation transport ATPase (P-type) (TC 3.A.3) family. Type IB subfamily.

It localises to the cell membrane. It carries out the reaction Cu(+)(in) + ATP + H2O = Cu(+)(out) + ADP + phosphate + H(+). Its function is as follows. Involved in copper export. This Staphylococcus aureus (strain COL) protein is Copper-exporting P-type ATPase (copA).